The following is a 124-amino-acid chain: Fluoride-specific ion channel FluC 2 (124 aa).

4 helical membrane passes run leucine 9–leucine 29, aspartate 34–valine 54, leucine 67–leucine 87, and leucine 99–leucine 119. Glycine 77 and threonine 80 together coordinate Na(+).

Belongs to the fluoride channel Fluc/FEX (TC 1.A.43) family.

It localises to the cell membrane. The enzyme catalyses fluoride(in) = fluoride(out). Na(+) is not transported, but it plays an essential structural role and its presence is essential for fluoride channel function. Fluoride-specific ion channel. Important for reducing fluoride concentration in the cell, thus reducing its toxicity. This is Fluoride-specific ion channel FluC 2 from Streptococcus pneumoniae serotype 4 (strain ATCC BAA-334 / TIGR4).